The chain runs to 178 residues: Acireductone dioxygenase (178 aa).

Fe(2+)-binding residues include His82, His84, Glu88, and His127. The Ni(2+) site is built by His82, His84, Glu88, and His127. Position 157 is a phosphoserine (Ser157).

The protein belongs to the acireductone dioxygenase (ARD) family. Requires Fe(2+) as cofactor. Ni(2+) is required as a cofactor.

It localises to the cytoplasm. The protein localises to the nucleus. The enzyme catalyses 1,2-dihydroxy-5-(methylsulfanyl)pent-1-en-3-one + O2 = 4-methylsulfanyl-2-oxobutanoate + formate + 2 H(+). It carries out the reaction 1,2-dihydroxy-5-(methylsulfanyl)pent-1-en-3-one + O2 = 3-(methylsulfanyl)propanoate + CO + formate + 2 H(+). Its pathway is amino-acid biosynthesis; L-methionine biosynthesis via salvage pathway; L-methionine from S-methyl-5-thio-alpha-D-ribose 1-phosphate: step 5/6. Its function is as follows. Catalyzes 2 different reactions between oxygen and the acireductone 1,2-dihydroxy-3-keto-5-methylthiopentene (DHK-MTPene) depending upon the metal bound in the active site. Fe-containing acireductone dioxygenase (Fe-ARD) produces formate and 2-keto-4-methylthiobutyrate (KMTB), the alpha-ketoacid precursor of methionine in the methionine recycle pathway. Ni-containing acireductone dioxygenase (Ni-ARD) produces methylthiopropionate, carbon monoxide and formate, and does not lie on the methionine recycle pathway. This chain is Acireductone dioxygenase (adi1), found in Schizosaccharomyces pombe (strain 972 / ATCC 24843) (Fission yeast).